We begin with the raw amino-acid sequence, 1155 residues long: DNA-directed RNA polymerase subunit beta (1155 aa).

Belongs to the RNA polymerase beta chain family. The RNAP catalytic core consists of 2 alpha, 1 beta, 1 beta' and 1 omega subunit. When a sigma factor is associated with the core the holoenzyme is formed, which can initiate transcription.

The enzyme catalyses RNA(n) + a ribonucleoside 5'-triphosphate = RNA(n+1) + diphosphate. In terms of biological role, DNA-dependent RNA polymerase catalyzes the transcription of DNA into RNA using the four ribonucleoside triphosphates as substrates. The polypeptide is DNA-directed RNA polymerase subunit beta (Borrelia recurrentis (strain A1)).